The primary structure comprises 1187 residues: Myelin transcription factor 1-like protein (1187 aa).

Residues Met-1–Pro-20 are disordered. A CCHHC-type 1 zinc finger spans residues Glu-22–Asp-65. Zn(2+) contacts are provided by Cys-31, Cys-36, His-49, and Cys-55. Disordered regions lie at residues Pro-56–Cys-178 and Arg-221–Ser-248. Residues Glu-89 to Glu-172 are compositionally biased toward acidic residues. A Phosphoserine modification is found at Ser-251. Disordered regions lie at residues Ser-343–Glu-422 and Arg-450–Gly-509. The span at Glu-344–Val-358 shows a compositional bias: polar residues. 3 stretches are compositionally biased toward basic and acidic residues: residues Val-362–Tyr-377, Ala-401–Asp-412, and Arg-450–Lys-504. 2 CCHHC-type zinc fingers span residues Ser-496 to Ile-539 and Leu-540 to Lys-583. 8 residues coordinate Zn(2+): Cys-505, Cys-510, His-523, Cys-529, Cys-549, Cys-554, His-567, and Cys-573. The disordered stretch occupies residues Ala-684–Ser-708. CCHHC-type zinc fingers lie at residues Leu-895–Ile-938, Asp-944–Gly-987, and Lys-997–Ala-1040. Zn(2+)-binding residues include Cys-904, Cys-909, His-922, Cys-928, Cys-953, Cys-958, His-971, Cys-977, Cys-1006, Cys-1011, His-1024, and Cys-1030. Residues Ser-1055–His-1131 adopt a coiled-coil conformation.

Belongs to the MYT1 family. Interacts with SIN3B. Brain, testis and pituitary gland. Expression is higher in the brain than in the testis and pituitary gland. Highest level expression seen in the developing CNS.

The protein localises to the nucleus. Its subcellular location is the chromosome. Its function is as follows. Transcription factor that plays a key role in neuronal differentiation. Acts by specifically repressing expression of non-neuronal genes during neuron differentiation. In contrast to other transcription repressors that inhibit specific lineages, mediates repression of multiple differentiation programs. Also represses expression of negative regulators of neurogenesis, such as members of the Notch signaling pathway, including HES1. The combination of three transcription factors, ASCL1, POU3F2/BRN2 and MYT1L, is sufficient to reprogram fibroblasts and other somatic cells into induced neuronal (iN) cells in vitro. Directly binds the 5'-AAGTT-3' core motif present on the promoter of target genes and represses transcription by recruiting a multiprotein complex containing SIN3B. The 5'-AAGTT-3' core motif is absent from the promoter of neural genes. The sequence is that of Myelin transcription factor 1-like protein (Myt1l) from Rattus norvegicus (Rat).